The chain runs to 430 residues: tRNA(Ile)-lysidine synthase (430 aa).

Residue 21–26 (SGGLDS) coordinates ATP.

This sequence belongs to the tRNA(Ile)-lysidine synthase family.

The protein resides in the cytoplasm. It catalyses the reaction cytidine(34) in tRNA(Ile2) + L-lysine + ATP = lysidine(34) in tRNA(Ile2) + AMP + diphosphate + H(+). In terms of biological role, ligates lysine onto the cytidine present at position 34 of the AUA codon-specific tRNA(Ile) that contains the anticodon CAU, in an ATP-dependent manner. Cytidine is converted to lysidine, thus changing the amino acid specificity of the tRNA from methionine to isoleucine. This is tRNA(Ile)-lysidine synthase from Salmonella heidelberg (strain SL476).